The following is a 589-amino-acid chain: Phenylalanine--tRNA ligase beta subunit (589 aa).

A B5 domain is found at 302–379; the sequence is LAYRKEMVRA…IAYGYNNIQM (78 aa). 4 residues coordinate Mg(2+): Asp357, Asp363, Glu366, and Asp367.

The protein belongs to the phenylalanyl-tRNA synthetase beta subunit family. Type 2 subfamily. As to quaternary structure, heterotetramer; dimer of two heterodimers formed by FARSA and FARSB. The cofactor is Mg(2+).

The protein resides in the cytoplasm. It catalyses the reaction tRNA(Phe) + L-phenylalanine + ATP = L-phenylalanyl-tRNA(Phe) + AMP + diphosphate + H(+). The chain is Phenylalanine--tRNA ligase beta subunit (FARSB) from Homo sapiens (Human).